Reading from the N-terminus, the 185-residue chain is Probable prefoldin subunit 3 (185 aa).

It belongs to the prefoldin subunit alpha family. In terms of assembly, heterohexamer of two PFD-alpha type and four PFD-beta type subunits.

Functionally, binds specifically to cytosolic chaperonin (c-CPN) and transfers target proteins to it. Binds to nascent polypeptide chain and promotes folding in an environment in which there are many competing pathways for nonnative proteins. This Caenorhabditis elegans protein is Probable prefoldin subunit 3 (pfd-3).